Consider the following 361-residue polypeptide: Glutamine synthetase (361 aa).

The GS beta-grasp domain maps to 23-103 (CQAMYIWVDG…VLCETYKYNK (81 aa)). Residues 110-361 (QRWKCMEVMT…LVRTICLNEQ (252 aa)) enclose the GS catalytic domain. Position 131 (E131) interacts with ATP. Residues E131, E133, and E200 each contribute to the Mn(2+) site. 200–205 (EFQVGP) contacts ATP. 243 to 244 (DW) is a binding site for L-glutamate. H250 is a binding site for Mn(2+). ATP is bound by residues 252-254 (NFS), R316, and R321. L-glutamate is bound at residue R316. 333-335 (YLE) contacts ADP. Mn(2+) is bound at residue E335. R337 contacts L-glutamate.

It belongs to the glutamine synthetase family. Requires Mg(2+) as cofactor. Mn(2+) is required as a cofactor.

The protein resides in the cytoplasm. It is found in the cytosol. The protein localises to the microsome. It localises to the mitochondrion. It carries out the reaction L-glutamate + NH4(+) + ATP = L-glutamine + ADP + phosphate + H(+). Its function is as follows. Glutamine synthetase that catalyzes the ATP-dependent conversion of glutamate and ammonia to glutamine. The sequence is that of Glutamine synthetase from Panulirus argus (Caribbean spiny lobster).